The chain runs to 2474 residues: MEKVHVDLDADSPYVKLLQKCFPHFEIEATQVTDNDHANARAFSHLATKLIESEVDPDQVILDIGSAPVRHTHSKHKYHCICPMISAEDPDRLQRYADKLRKSDVTDRFIASKAADLLTVMSTPDVETPSLCMHTDSTCRYHGTVAVYQDVYAVHAPTSIYHQALKGVRTIYWIGFDTTPFMYKNMAGAYPTYNTNWADESVLEARNIGLCSSDLHEKRLGKISIMRKKKLQPTNKVVFSVGSTIYTEERILLRSWHLPNVFHLKGKTSFTGRCNTIVSCDGYVVKKITISPGIYGKVDNLASTLHREGFLSCKVTDTLRGERVSFPVCTYVPATLCDQMTGILATDVSVDDAQKLLVGLNQRIVVNGRTQRNTNTMQNYLLPVVAQAFSRWAREYRADLEDEKDLGVRERSLVMGCCWAFKTHKITSIYKKPGTQTIKKVPAVFNSFVIPQFNSYGLNIGLRRRIKMLLEEKRKPAPIITEADVAHLKGMQEEAEAVAEAEAVRAALPPLLPEVERETIEADIDLIMQEAGAGSVETPRRHIKVTTYPGEETIGSYAVLSPQAVLNSEKLACIHPLAEQVLVMTHKGRAGRYKVEPYHGRVVVPSGTAIPIPDFQALSESATIVYNEREFVNRYLHHIAINGGAINTDEEYYKVLRSSEADSEYVFDIDARKCVKKADAGPMCLVGELVDPPFHEFAYESLKTRPAAPHKVPTIGVYGVPGSGKSGIIKSAVTKRDLVVSAKKENCTEIIKDVKRMRGMDIAARTVDSVLLNGVKHPVDTLYIDEAFACHAGTLLALIAIVKPKKVVLCGDPKQCGFFNMMCLKVHFNHEICTEVYHKSISRRCTKTVTAIVSTLFYDKRMRTVNPCSDKIIIDTTSTTKPQRDDIILTCFRGWVKQLQIDYKNHEIMTAAASQGLTRKGVYAVRYKVNENPLYAQTSEHVNVLLTRTEKRIVWKTLAGDPWIKTLTAHYPGEFSATLEEWQAEHDAIMERILETPASSDVYQNKVHVCWAKALEPVLATANITLTRSQWETIPAFKDDKAFSPEMALNFLCTRFFGVDIDSGLFSAPTVPLTYTNEHWDNSPGPNRYGLCMRTAKELARRYPCILKAVDTGRLADVRTNTIKDYSPLINVVPLNRRLPHSLVVSHRYTGDGNYSQLLSKLIGKTVLVIGTPISVPGKRVETLGPGPQCTYKADLDLGIPSTIGKYDIIFVNVRTPYKHHHYQQCEDHAIHHSMLTRKAVDHLNKGGTCVALGYGTADRATENIISAVARSFRFSRVCQPKCAWENTEVAFVFFGKDNGNHLRDQDQLSIVLNNIYQGSTQYEAGRAPAYRVIRGDISKSTDEAIVNAANNKGQPGAGVCGALYKKWPGAFDKVPIATGTAHLVKHTPNIIHAVGPNFSRVSEVEGNQKLSEVYMDIAKIINRERYNKVSIPLLSTGIYAGGKDRVMQSLNHLFTAMDTTDADVTIYCLDKQWEARIKDAIARKESVEELVEDDKPVDIELVRVHPLSSLVGRPGYSTDEGKVHSYLEGTRFHQTAKDIAEIYAMWPNKQEANEQICLYVLGESMTSIRSKCPVEDSEASSPPHTIPCLCNYAMTAERVYRLRMAKNEQFAVCSSFQLPKYRITGVQKIQCNKPVIFSGVVPPAIHPRKFSAIEETVPVTIERLVPRRPAPPVPVPARIPSPRCSPAVSMQSLGGSSTSDVVISEAEVHDSDSDCSIPPMPFVVEAEVHASQGSHWSIPSASGFEIRELPEDRSISGSPTRTSVISDHSVNLITFDSVTDIFENFKQAPFQFLSEIRPIPAPRRRVGGFETDTKRYDKTEEKPIPKPRTRTTKYKQPPGVARSISEAELDEFIRRHSNXRYEAGAYIFSSETGQGHLQQKSTRQCKLQNPILERSVHEKFYAPRLDLEREKLLQKKLQLCASEGNRSRYQSRKVENMKAITAERLLQGIGAYLSAESQPVECYKVNYPVPIYSTTRSNRFSSADVAVRVCNLVLQENFPTVASYTITDEYDAYLDMVDGASCCLDTATFCPAKLRSFPKKHSYLRPEIRSAVPSPIQNTLQNVLAAATKRNCNVTQMRELPVLDSAAFNVECFKKYACNDEYWDTFKNNPIRLTTENVTQYVTKLKGPKAAALFAKTHNLQPLHEIPMDRFVMDLKRDVKVTPGTKHTEERPKVQVIQAAEPLATAYLCGIHRELVRRLNAVLLPNIHTLFDMSAEDFDAIIAEHFQFGDAVLETDIASFDKSEDDAIAMSALMILEDLGVDQALLDLIEAAFGNITSVHLPTGTRFKFGAMMKSGMFLTLFINTVVNIMIASRVLRERLTNSPCAAFIGDDNIVKGVKSDALMAERCATWLNMEVKIIDATVGVKAPYFCGGFIVVDQVTGTACRVADPLKRLFKLGKPLPLDDDQDGDRRRALYDEALRWNRIGITDELIKAVESRYEVFYISLVITALTTLAATVSNFKYIRGNPITLYG.

The 230-residue stretch at 28-257 (EATQVTDNDH…EERILLRSWH (230 aa)) folds into the Alphavirus-like MT domain. The interval 242-261 (GSTIYTEERILLRSWHLPNV) is nsP1 membrane-binding. A lipid anchor (S-palmitoyl cysteine; by host) is attached at C417. Residues 674-839 (CVKKADAGPM…HEICTEVYHK (166 aa)) enclose the (+)RNA virus helicase ATP-binding domain. 719–726 (GVPGSGKS) is an a ribonucleoside 5'-triphosphate binding site. Positions 840–988 (SISRRCTKTV…LEEWQAEHDA (149 aa)) constitute a (+)RNA virus helicase C-terminal domain. The Peptidase C9 domain maps to 1001-1320 (DVYQNKVHVC…IVLNNIYQGS (320 aa)). The tract at residues 1002–1021 (VYQNKVHVCWAKALEPVLAT) is nucleolus localization signal. The active-site For cysteine protease nsP2 activity is C1010. Residues 1054-1063 (TRFFGVDIDS) carry the Nuclear export signal motif. Residue H1079 is the For cysteine protease nsP2 activity of the active site. Positions 1177-1181 (PGKRV) match the Nuclear localization signal motif. The 159-residue stretch at 1328–1486 (APAYRVIRGD…RIKDAIARKE (159 aa)) folds into the Macro domain. ADP-D-ribose-binding residues include D1337, N1351, G1359, G1438, I1439, and Y1440. Zn(2+) contacts are provided by C1589, C1591, C1614, and C1632. The interval 1773–1785 (LITFDSVTDIFEN) is binding to host G3BP family members. Residues 1820 to 1841 (TEEKPIPKPRTRTTKYKQPPGV) form a disordered region. The segment at 1838–1854 (PPGVARSISEAELDEFI) is binding to host FXR family members. The 116-residue stretch at 2231-2346 (DAVLETDIAS…KGVKSDALMA (116 aa)) folds into the RdRp catalytic domain.

As to quaternary structure, interacts with non-structural protein 3. Interacts with RNA-directed RNA polymerase nsP4. Interacts with protease nsP2. interacts with itself. In terms of assembly, interacts with mRNA-capping enzyme nsP1. Interacts with host DDX1. Interacts with host DDX3. Interacts (via C-terminus) with host FXR1; this interaction inhibits the formation of host stress granules on viral mRNAs and the nsp3-FXR1 complexes bind viral RNAs and probably orchestrate the assembly of viral replication complexes. Interacts (via C-terminus) with host FXR2; this interaction inhibits the formation of host stress granules on viral mRNAs and the nsp3-FXR2 complexes bind viral RNAs and probably orchestrate the assembly of viral replication complexes. Interacts (via C-terminus) with host FMR1; this interaction inhibits the formation of host stress granules on viral mRNAs and the nsp3-FMR1 complexes bind viral RNAs and probably orchestrate the assembly of viral replication complexes. Interacts (via C-terminus) with host G3BP1; this interaction inhibits the formation of host stress granules on viral mRNAs and the nsp3-G3BP1 complexes bind viral RNAs and probably orchestrate the assembly of viral replication complexes. Interacts (via C-terminus) with host G3BP2; this interaction inhibits the formation of host stress granules on viral mRNAs and the nsp3-G3BP2 complexes bind viral RNAs and probably orchestrate the assembly of viral replication complexes. Interacts with mRNA-capping enzyme nsP1. Interacts with protease nsP2. interacts with itself. As to quaternary structure, interacts with RNA-directed RNA polymerase nsP4. Interacts with mRNA-capping enzyme nsP1. Interacts with KPNA1/karyopherin-alpha1; this interaction probably allows the active transport of protease nsP2 into the host nucleus. It depends on Mg(2+) as a cofactor. Requires Mn(2+) as cofactor. Post-translationally, specific enzymatic cleavages in vivo yield mature proteins. The processing of the polyprotein is temporally regulated. In early stages (1.7 hpi), P1234 is first cleaved in trans through its nsP2 protease activity, releasing P123' and nsP4, which associate to form the early replication complex. At the same time, P1234 is also cut at the nsP1/nsP2 site early in infection but with lower efficiency. After replication of the viral minus-strand RNAs (4 hpi), the polyproteins are cut at the nsP1/nsP2 and nsP2/nsP3 sites very efficiently, preventing accumulation of P123' and P1234 and allowing the formation of the late replication complex. NsP3'/nsP4 site is not cleaved anymore and P34 is produced rather than nsP4. Specific enzymatic cleavages in vivo yield mature proteins. The processing of the polyprotein is temporally regulated. In early stages (1.7 hpi), P123 is cleaved at the nsP1/nsP2 site with low efficiency. After replication of the viral minus-strand RNAs (4 hpi), the polyproteins are cut at the nsP1/nsP2 and nsP2/nsP3 sites very efficiently, preventing accumulation of P123 and allowing the formation of the late replication complex. In terms of processing, specific enzymatic cleavages in vivo yield mature proteins. The processing of the polyprotein is temporally regulated. In early stages (1.7 hpi), P123' is cleaved at the nsP1/nsP2 site with low efficiency. After replication of the viral minus-strand RNAs (4 hpi), the polyproteins are cut at the nsP1/nsP2 and nsP2/nsP3 sites very efficiently, preventing accumulation of P123' and allowing the formation of the late replication complex. Post-translationally, palmitoylated by host palmitoyltransferases ZDHHC2 and ZDHHC19. Phosphorylated by host on serines and threonines. In terms of processing, ubiquitinated; targets the protein for rapid degradation via the ubiquitin system. Nsp4 is present in extremely low quantities due to low frequency of translation through the amber stop-codon and the degradation by the ubiquitin pathway.

The protein resides in the host cytoplasmic vesicle membrane. It localises to the host cell membrane. It is found in the host cell projection. The protein localises to the host filopodium. Its subcellular location is the host nucleus. The protein resides in the host cytoplasm. It catalyses the reaction GTP + S-adenosyl-L-methionine = N(7)-methyl-GTP + S-adenosyl-L-homocysteine. It carries out the reaction N(7)-methyl-GTP + L-histidyl-[protein] = N(tele)-(N(7)-methylguanosine 5'-phospho)-L-histidyl-[protein] + diphosphate. The enzyme catalyses N(tele)-(N(7)-methylguanosine 5'-phospho)-L-histidyl-[protein] + a 5'-end diphospho-(purine-ribonucleoside) in mRNA + H(+) = a 5'-end (N(7)-methyl 5'-triphosphoguanosine)-(purine-ribonucleoside) in mRNA + L-histidyl-[protein]. The catalysed reaction is a 5'-end triphospho-ribonucleoside in mRNA + H2O = a 5'-end diphospho-ribonucleoside in mRNA + phosphate + H(+). It catalyses the reaction a ribonucleoside 5'-triphosphate + H2O = a ribonucleoside 5'-diphosphate + phosphate + H(+). It carries out the reaction ATP + H2O = ADP + phosphate + H(+). The enzyme catalyses RNA(n) + a ribonucleoside 5'-triphosphate = RNA(n+1) + diphosphate. The catalysed reaction is 4-O-(ADP-D-ribosyl)-L-aspartyl-[protein] + H2O = L-aspartyl-[protein] + ADP-D-ribose + H(+). It catalyses the reaction 5-O-(ADP-D-ribosyl)-L-glutamyl-[protein] + H2O = L-glutamyl-[protein] + ADP-D-ribose + H(+). It carries out the reaction RNA(n) + ATP = RNA(n)-3'-adenine ribonucleotide + diphosphate. The enzyme catalyses ADP-alpha-D-ribose 1''-phosphate + H2O = ADP-D-ribose + phosphate. Inhibited by sinefungin. Its function is as follows. Inactive precursor of the viral replicase, which is activated by cleavages carried out by the viral protease nsP2. In terms of biological role, the early replication complex formed by the polyprotein P123 and nsP4 synthesizes the minus-strand RNAs (antigenome). Polyprotein P123 is a short-lived polyprotein that accumulates during early stage of infection. As soon P123 is cleaved into mature proteins, the plus-strand RNAs synthesis begins. The early replication complex formed by the polyprotein P123' and nsP4 synthesizes minus-strand RNAs (antigenome). Polyprotein P123' is a short-lived polyprotein that accumulates during early stage of infection. As soon P123' is cleaved into mature proteins, the plus-strand RNAs synthesis begins. Functionally, cytoplasmic capping enzyme that catalyzes two virus-specific reactions: methyltransferase and nsP1 guanylyltransferase. mRNA-capping is necessary since all viral RNAs are synthesized in the cytoplasm, and host capping enzymes are restricted to the nucleus. The enzymatic reaction involves a covalent link between 7-methyl-GMP and nsP1, whereas eukaryotic capping enzymes form a covalent complex only with GMP. NsP1 capping consists in the following reactions: GTP is first methylated into 7-methyl-GMP and then is covalently linked to nsP1 to form the m7GMp-nsP1 complex from which 7-methyl-GMP complex is transferred to the mRNA to create the cap structure. NsP1 is also needed for the initiation of the minus-strand RNAs synthesis. Probably serves as a membrane anchor for the replication complex composed of nsP1-nsP4. Nsp1 is needed for the initiation of the minus-strand RNAs synthesis. Palmitoylated nsP1 is remodeling host cell cytoskeleton, and induces filopodium-like structure formation at the surface of the host cell. Its function is as follows. Multifunctional protein whose N-terminus is part of the RNA polymerase complex and displays NTPase, RNA triphosphatase and helicase activities. NTPase and RNA triphosphatase are involved in viral RNA capping and helicase keeps a check on the dsRNA replication intermediates. The C-terminus harbors a protease that specifically cleaves the polyproteins and releases the mature proteins. Required for the shutoff of minus-strand RNAs synthesis. Inhibits host translation to ensure maximal viral gene expression and evade host immune response. In terms of biological role, seems to be essential for minus-strand RNAs and subgenomic 26S mRNAs synthesis. Displays mono-ADP-ribosylhydrolase activity. ADP-ribosylation is a post-translational modification that controls various processes of the host cell and the virus probably needs to revert it for optimal viral replication. Binds proteins of FXR and G3BP families and sequesters them into the viral RNA replication complexes thereby inhibiting the formation of host stress granules on viral mRNAs. The nsp3-FXR and nsp3-G3BP complexes bind viral RNAs and probably orchestrate the assembly of viral replication complexes, thanks to the ability of G3BP and FXR family members to self-assemble and bind DNA. Seems to be essential for minus-strand RNAs and subgenomic 26S mRNAs synthesis. Displays mono-ADP-ribosylhydrolase activity. ADP-ribosylation is a post-translational modification that controls various processes of the host cell and the virus probably needs to revert it for optimal viral replication. Binds proteins of FXR and G3BP families and sequesters them into the viral RNA replication complexes thereby inhibiting the formation of host stress granules on viral mRNAs. The nsp3'-FXR and nsp3-G3BP complexes bind viral RNAs and probably orchestrate the assembly of viral replication complexes, thanks to the ability of G3BP and FXR family members to self-assemble and bind DNA. Functionally, RNA dependent RNA polymerase. Replicates genomic and antigenomic RNA by recognizing replications specific signals. The early replication complex formed by the polyprotein P123 and nsP4 synthesizes minus-strand RNAs. The late replication complex composed of fully processed nsP1-nsP4 is responsible for the production of genomic and subgenomic plus-strand RNAs. This Eastern equine encephalitis virus (strain PE-3.0815) (EEEV) protein is Polyprotein P1234.